The chain runs to 285 residues: Eukaryotic translation initiation factor 3 subunit F-2 (285 aa).

The 135-residue stretch at 11–145 (VYLKPLVFFQ…TRLYCAVEMG (135 aa)) folds into the MPN domain.

It belongs to the eIF-3 subunit F family. As to quaternary structure, component of the eukaryotic translation initiation factor 3 (eIF-3) complex. The eIF-3 complex interacts with pix.

It is found in the cytoplasm. In terms of biological role, component of the eukaryotic translation initiation factor 3 (eIF-3) complex, which is involved in protein synthesis of a specialized repertoire of mRNAs and, together with other initiation factors, stimulates binding of mRNA and methionyl-tRNAi to the 40S ribosome. The eIF-3 complex specifically targets and initiates translation of a subset of mRNAs involved in cell proliferation. This chain is Eukaryotic translation initiation factor 3 subunit F-2, found in Drosophila melanogaster (Fruit fly).